The sequence spans 91 residues: Co-chaperonin GroES (91 aa).

It belongs to the GroES chaperonin family. Heptamer of 7 subunits arranged in a ring. Interacts with the chaperonin GroEL.

It is found in the cytoplasm. Functionally, together with the chaperonin GroEL, plays an essential role in assisting protein folding. The GroEL-GroES system forms a nano-cage that allows encapsulation of the non-native substrate proteins and provides a physical environment optimized to promote and accelerate protein folding. GroES binds to the apical surface of the GroEL ring, thereby capping the opening of the GroEL channel. The chain is Co-chaperonin GroES from Oenococcus oeni (strain ATCC BAA-331 / PSU-1).